A 143-amino-acid polypeptide reads, in one-letter code: Large-conductance mechanosensitive channel (143 aa).

Helical transmembrane passes span 19 to 39 and 81 to 101; these read VGVI…ADVI and GSFL…FLVV.

This sequence belongs to the MscL family. Homopentamer.

The protein localises to the cell inner membrane. In terms of biological role, channel that opens in response to stretch forces in the membrane lipid bilayer. May participate in the regulation of osmotic pressure changes within the cell. The chain is Large-conductance mechanosensitive channel from Rhodopseudomonas palustris (strain HaA2).